The chain runs to 89 residues: Small ribosomal subunit protein bS20 (89 aa).

Positions 1-10 are enriched in basic residues; that stretch reads MKNRSAIKRH. Residues 1 to 30 are disordered; sequence MKNRSAIKRHNQSEVRRMRNRSAKSEVRTT. Residues 11–30 show a composition bias toward basic and acidic residues; it reads NQSEVRRMRNRSAKSEVRTT.

It belongs to the bacterial ribosomal protein bS20 family.

In terms of biological role, binds directly to 16S ribosomal RNA. This Treponema denticola (strain ATCC 35405 / DSM 14222 / CIP 103919 / JCM 8153 / KCTC 15104) protein is Small ribosomal subunit protein bS20.